Reading from the N-terminus, the 437-residue chain is Doublesex- and mab-3-related transcription factor A2 (437 aa).

Residues Cys-49–Arg-96 constitute a DNA-binding region (DM). Residues Ile-160 to Gln-253 are disordered. 2 stretches are compositionally biased toward low complexity: residues Ser-179–Glu-201 and Ser-223–Gly-235. Positions Arg-254–Gln-289 constitute a DMA domain.

It belongs to the DMRT family.

It localises to the nucleus. In terms of biological role, may be involved in sexual development. In Xenopus laevis (African clawed frog), this protein is Doublesex- and mab-3-related transcription factor A2 (dmrta2).